The following is a 937-amino-acid chain: Protocadherin alpha-7 (937 aa).

The N-terminal stretch at 1–29 (MVNLRGYNWKSQQLLLFLIIVAAWEAGSG) is a signal peptide. Residues 30-697 (QLHYSVPEEA…RVDQRLVDVN (668 aa)) lie on the Extracellular side of the membrane. Cadherin domains are found at residues 34-133 (SVPE…PPMF), 157-242 (ASDA…APVF), 243-350 (DRSL…APQL), 351-455 (TVSS…APLF), 456-565 (AQPE…APTL), and 587-682 (PGQV…SSKV). Cysteine 96 and cysteine 102 are oxidised to a cystine. 2 O-linked (Man) threonine glycosylation sites follow: threonine 223 and threonine 225. N-linked (GlcNAc...) asparagine glycans are attached at residues asparagine 257 and asparagine 265. A glycan (O-linked (Man) threonine) is linked at threonine 438. A glycan (O-linked (Man) serine) is linked at serine 478. N-linked (GlcNAc...) asparagine glycosylation occurs at asparagine 548. A helical membrane pass occupies residues 698–718 (VYLIIAICAVSSLLVLTLLLY). Residues 719–937 (TALRCSATPT…GNSTTDNSDQ (219 aa)) lie on the Cytoplasmic side of the membrane. Disordered regions lie at residues 755 to 794 (RQRVCSGEGPPKTDLMAFSPSLPQGPSSTDNPRQPNPDWR) and 816 to 843 (RAGPGGPDQQWPTVSSATPEPEAGEVSP). PXXP repeat units follow at residues 774 to 777 (PSLP), 786 to 789 (PRQP), 819 to 822 (PGGP), 860 to 863 (PGNP), and 878 to 881 (PGSP). The tract at residues 774–881 (PSLPQGPSST…PDKFIIPGSP (108 aa)) is 5 X 4 AA repeats of P-X-X-P. Positions 775–787 (SLPQGPSSTDNPR) are enriched in polar residues. Residues 887–937 (RQEPANNQIDKSDFITFGKKEETKKKKKKKKGNKTQEKKEKGNSTTDNSDQ) form a disordered region. Basic and acidic residues predominate over residues 896–910 (DKSDFITFGKKEETK).

In terms of assembly, forms homodimers in trans (molecules expressed by two different cells). Forms promiscuous heterodimers in cis (at the plasma membrane of the same cell) with other protocadherins.

It localises to the cell membrane. Functionally, calcium-dependent cell-adhesion protein involved in cells self-recognition and non-self discrimination. Thereby, it is involved in the establishment and maintenance of specific neuronal connections in the brain. The sequence is that of Protocadherin alpha-7 from Mus musculus (Mouse).